A 1068-amino-acid polypeptide reads, in one-letter code: tRNA wybutosine-synthesizing protein 4 (1068 aa).

A disordered region spans residues 1–31; it reads MCPPEQPAKAMAPSKSNQAAKSAVPTKEEKS. S-adenosyl-L-methionine is bound by residues arginine 81, glycine 107, aspartate 134, 181–182, and glutamate 208; that span reads DL. In terms of domain architecture, JmjC spans 876–1024; it reads ADFPSLSSDF…ALGRDVYGNR (149 aa).

It belongs to the methyltransferase superfamily. LCMT family.

The catalysed reaction is 7-[(3S)-3-amino-3-carboxypropyl]wyosine(37) in tRNA(Phe) + S-adenosyl-L-methionine = 7-[(3S)-(3-amino-3-methoxycarbonyl)propyl]wyosine(37) in tRNA(Phe) + S-adenosyl-L-homocysteine. It carries out the reaction 7-[(3S)-(3-amino-3-methoxycarbonyl)propyl]wyosine(37) in tRNA(Phe) + S-adenosyl-L-methionine + CO2 = wybutosine(37) in tRNA(Phe) + S-adenosyl-L-homocysteine + 2 H(+). It participates in tRNA modification; wybutosine-tRNA(Phe) biosynthesis. Its function is as follows. Probable S-adenosyl-L-methionine-dependent methyltransferase that acts as a component of the wybutosine biosynthesis pathway. Wybutosine is a hyper modified guanosine with a tricyclic base found at the 3'-position adjacent to the anticodon of eukaryotic phenylalanine tRNA. May methylate the carboxyl group of leucine residues to form alpha-leucine ester residues. The polypeptide is tRNA wybutosine-synthesizing protein 4 (ppm2) (Emericella nidulans (strain FGSC A4 / ATCC 38163 / CBS 112.46 / NRRL 194 / M139) (Aspergillus nidulans)).